The chain runs to 336 residues: MGSAWPAEIRKIAKISKRLLGATVILGFGVAEAQAAEFFGTFSSGPAGQFIDADPRPLFELSSDFSFDDPNGLKWPVPTGTRVDGASIPQTFWSIIGGPFEGAYLKASVIHDYFCETKSRTAHDTHRNFYYGMRANGVPGWKAKAMYWAVATYGPDWTLETKVVNELQCKPTPFGGRTCSSLPKMVTTTVEKQAINLEDPKALAVAVGKFNAIARNLKTSDGETLDLLPTGVVSGSLESIETNATNAREMFATSDYRLDPKLLGVILEPKQIKLDSIDAWPDGQIPSFTDVQAQGLPQTGGLVGGNGIVLSPAEFENFEQRLDLSPTDFTLPSKLE.

Positions 1 to 33 (MGSAWPAEIRKIAKISKRLLGATVILGFGVAEA) are cleaved as a signal peptide.

This is an uncharacterized protein from Sinorhizobium fredii (strain NBRC 101917 / NGR234).